The following is a 494-amino-acid chain: MARSCVTDPRWRELVALYRYDWIAAADVLFGKTPTWQQDEIIESTQQDGSWTSVTSGHGTGKSDMTSIIAILFIMFFPGARVILVANKRQQVLDGIFKYIKSNWATAVSRFPWLSKYFILTETSFFEVTGKGVWTILIKSCRPGNEEALAGEHADHLLYIIDEASGVSDKAFSVITGALTGKDNRILLLSQPTRPSGYFYDSHHRLAIRPGNPDGLFTAIILNSEESPLVDAKFIRAKLAEYGGRDNPMYMIKVRGEFPKSQDGFLLGRDEVERATRRKVKIAKGWGWVACVDVAGGTGRDKSVINIMMVSGQRNKRRVINYRMLEYTDVTETQLAAKIFAECNPERFPNITIAIDGDGLGKSTADLMYERYGITVQRIRWGKKMHSREDKSLYFDMRAFANIQAAEAVKSGRMRLDKGAATIEEASKIPVGINSAGQWKVMSKEDMKKKLNLHSPDHWDTYCFAMLANYVPQDEVLSVEDEAQVDEALAWLNE.

26–33 (ADVLFGKT) is an ATP binding site. The Walker A motif motif lies at 56-63 (SGHGTGKS). Positions 158–163 (LYIIDE) match the Walker B motif motif. Glutamate 163 functions as the For ATPase activity in the catalytic mechanism. Residues aspartate 293, aspartate 356, and aspartate 446 each contribute to the Mg(2+) site.

It belongs to the punalikevirus large terminase family. As to quaternary structure, interacts with pacA protein. Mg(2+) is required as a cofactor.

In terms of biological role, component of the molecular motor that translocates genomic DNA in empty capsid during DNA packaging. Heterooligomerize with small terminase protein to be docked on capsid portal protein. Forms a ring-like structure through which genomic DNA is translocated into the capsid. May have or induce an endonuclease activity to cleave the genome concatemer after encapsidation. The polypeptide is Probable terminase, large subunit (pacB) (Escherichia coli (Bacteriophage P7)).